A 170-amino-acid chain; its full sequence is VIP peptides (170 aa).

The signal sequence occupies residues 1–20; sequence MDTRNKAQLLVLLTLLSVLF. The propeptide occupies 21–79; it reads SQTSAWPLYRAPSALRLGDRIPFEGANEPDQVSLKEDIDMLQNALAENDTPYYDVSRNA. Serine 76 is modified (phosphoserine). Methionine 107 is subject to Methionine amide. Residue asparagine 152 is modified to Asparagine amide. A propeptide spanning residues 156–170 is cleaved from the precursor; sequence SSEGESPDFPEELEK.

It belongs to the glucagon family.

Its subcellular location is the secreted. Its function is as follows. VIP is a neuropeptide involved in a diverse array of physiological processes through activating the PACAP subfamily of class B1 G protein-coupled receptors: VIP receptor 1 (VPR1) and VIP receptor 2 (VPR2). Abundantly expressed throughout the CNS and peripheral nervous systems where they primarily exert neuroprotective and immune modulatory roles. Also causes vasodilation, lowers arterial blood pressure, stimulates myocardial contractility, increases glycogenolysis and relaxes the smooth muscle of trachea, stomach and gall bladder. Functionally, PHM-27 and PHV-42 are two bioactive forms from proteolysis of the same precursor protein, that cause vasodilation. PHM-27 is a potent agonist of the calcitonin receptor CALCR, with similar efficacy as calcitonin. The sequence is that of VIP peptides from Homo sapiens (Human).